The following is a 1284-amino-acid chain: Integrator complex subunit 6 (1284 aa).

One can recognise a VWFA domain in the interval 3–134 (IILFLVDTSS…PSVIIVITDG (132 aa)). 4 disordered regions span residues 653-824 (DVAP…GMSN), 864-895 (ETGETEAVPGGASLPGASSANEPSSIGASPAV), 1053-1086 (TSSGSSVGAGASNSNLNGNGSTESGGGVSSDDHA), and 1125-1180 (NNSS…PGQS). The segment covering 690–721 (SPGGGSGPGMPGMPGMGGGMSGLMLGAGGSGG) has biased composition (gly residues). Low complexity-rich tracts occupy residues 752 to 781 (DSRSSSSGSESSTTGSAPGSPIPGATSSIS) and 803 to 824 (NSNSSFVSSTSEASASDSGMSN). The segment covering 879–890 (GASSANEPSSIG) has biased composition (polar residues). Composition is skewed to low complexity over residues 1053 to 1074 (TSSGSSVGAGASNSNLNGNGST) and 1125 to 1141 (NNSSAAGAASGSTLSNN). Residues 1159–1171 (INSSCGSSPTHNN) show a composition bias toward polar residues.

Belongs to the Integrator subunit 6 family. Belongs to the multiprotein complex Integrator, at least composed of IntS1, IntS2, IntS3, IntS4, omd/IntS5, IntS6, defl/IntS7, IntS8, IntS9, IntS10, IntS11, IntS12, asun/IntS13, IntS14 and IntS15. The core complex associates with protein phosphatase 2A subunits mts/PP2A and Pp2A-29B, to form the Integrator-PP2A (INTAC) complex.

The protein localises to the nucleus. In terms of biological role, component of the integrator complex, a multiprotein complex that terminates RNA polymerase II (Pol II) transcription in the promoter-proximal region of genes. The integrator complex provides a quality checkpoint during transcription elongation by driving premature transcription termination of transcripts that are unfavorably configured for transcriptional elongation: the complex terminates transcription by (1) catalyzing dephosphorylation of the C-terminal domain (CTD) of Pol II subunit Polr2A/Rbp1 and Spt5, and (2) degrading the exiting nascent RNA transcript via endonuclease activity. The integrator complex is also involved in the 3'-end processing of the U7 snRNA, and also the spliceosomal snRNAs U1, U2, U4 and U5. Within the integrator complex, IntS6 acts as a substrate adapter for protein phosphatase 2A (PP2A). This chain is Integrator complex subunit 6, found in Drosophila melanogaster (Fruit fly).